We begin with the raw amino-acid sequence, 173 residues long: Photosystem I assembly protein Ycf3 (173 aa).

3 TPR repeats span residues 35-68 (AFAY…EEDP), 72-105 (SYIL…NPRM), and 113-146 (AVIY…WKRA).

Belongs to the Ycf3 family.

It localises to the cellular thylakoid membrane. In terms of biological role, essential for the assembly of the photosystem I (PSI) complex. May act as a chaperone-like factor to guide the assembly of the PSI subunits. The sequence is that of Photosystem I assembly protein Ycf3 from Thermosynechococcus vestitus (strain NIES-2133 / IAM M-273 / BP-1).